A 189-amino-acid polypeptide reads, in one-letter code: 3-hydroxyanthranilate 3,4-dioxygenase (189 aa).

Residue arginine 49 participates in O2 binding. Residues histidine 53, glutamate 59, and histidine 97 each coordinate Fe cation. Glutamate 59 serves as a coordination point for substrate. Arginine 101 and glutamate 112 together coordinate substrate. 4 residues coordinate Fe cation: cysteine 127, cysteine 130, cysteine 165, and cysteine 168.

The protein belongs to the 3-HAO family. In terms of assembly, homodimer. Fe(2+) is required as a cofactor.

The catalysed reaction is 3-hydroxyanthranilate + O2 = (2Z,4Z)-2-amino-3-carboxymuconate 6-semialdehyde. It functions in the pathway cofactor biosynthesis; NAD(+) biosynthesis; quinolinate from L-kynurenine: step 3/3. Catalyzes the oxidative ring opening of 3-hydroxyanthranilate to 2-amino-3-carboxymuconate semialdehyde, which spontaneously cyclizes to quinolinate. This is 3-hydroxyanthranilate 3,4-dioxygenase from Cupriavidus pinatubonensis (strain JMP 134 / LMG 1197) (Cupriavidus necator (strain JMP 134)).